The primary structure comprises 353 residues: UPF0283 membrane protein YcjF (353 aa).

3 helical membrane passes run 70–90 (MVMG…VQWT), 100–120 (VALG…GSVV), and 213–233 (ESTL…FIAW).

Belongs to the UPF0283 family.

The protein resides in the cell inner membrane. The chain is UPF0283 membrane protein YcjF from Shigella sonnei (strain Ss046).